The following is a 314-amino-acid chain: DNA-directed RNA polymerase subunit alpha (314 aa).

An alpha N-terminal domain (alpha-NTD) region spans residues 1-228 (MIEIEKPRIE…EHLNIFVGLT (228 aa)). Residues 245–314 (KEKVLEMSIE…DLGLGLRKED (70 aa)) form an alpha C-terminal domain (alpha-CTD) region.

The protein belongs to the RNA polymerase alpha chain family. As to quaternary structure, homodimer. The RNAP catalytic core consists of 2 alpha, 1 beta, 1 beta' and 1 omega subunit. When a sigma factor is associated with the core the holoenzyme is formed, which can initiate transcription.

The catalysed reaction is RNA(n) + a ribonucleoside 5'-triphosphate = RNA(n+1) + diphosphate. Its function is as follows. DNA-dependent RNA polymerase catalyzes the transcription of DNA into RNA using the four ribonucleoside triphosphates as substrates. This chain is DNA-directed RNA polymerase subunit alpha, found in Staphylococcus saprophyticus subsp. saprophyticus (strain ATCC 15305 / DSM 20229 / NCIMB 8711 / NCTC 7292 / S-41).